A 537-amino-acid chain; its full sequence is Putative cysteine ligase BshC (537 aa).

Positions 422–450 form a coiled coil; it reads IEKVEGMIEQQRRLNKDLLDEVAGNQNNI.

This sequence belongs to the BshC family.

Its function is as follows. Involved in bacillithiol (BSH) biosynthesis. May catalyze the last step of the pathway, the addition of cysteine to glucosamine malate (GlcN-Mal) to generate BSH. This chain is Putative cysteine ligase BshC, found in Staphylococcus aureus (strain USA300).